Reading from the N-terminus, the 379-residue chain is Queuine tRNA-ribosyltransferase (379 aa).

Asp-89 functions as the Proton acceptor in the catalytic mechanism. Residues 89 to 93 (DSGGF), Asp-143, Gln-187, and Gly-214 contribute to the substrate site. The interval 245 to 251 (GVGKPED) is RNA binding. Asp-264 acts as the Nucleophile in catalysis. Residues 269 to 273 (TRNAR) are RNA binding; important for wobble base 34 recognition. Cys-302, Cys-304, Cys-307, and His-333 together coordinate Zn(2+).

The protein belongs to the queuine tRNA-ribosyltransferase family. As to quaternary structure, homodimer. Within each dimer, one monomer is responsible for RNA recognition and catalysis, while the other monomer binds to the replacement base PreQ1. Requires Zn(2+) as cofactor.

The enzyme catalyses 7-aminomethyl-7-carbaguanine + guanosine(34) in tRNA = 7-aminomethyl-7-carbaguanosine(34) in tRNA + guanine. Its pathway is tRNA modification; tRNA-queuosine biosynthesis. In terms of biological role, catalyzes the base-exchange of a guanine (G) residue with the queuine precursor 7-aminomethyl-7-deazaguanine (PreQ1) at position 34 (anticodon wobble position) in tRNAs with GU(N) anticodons (tRNA-Asp, -Asn, -His and -Tyr). Catalysis occurs through a double-displacement mechanism. The nucleophile active site attacks the C1' of nucleotide 34 to detach the guanine base from the RNA, forming a covalent enzyme-RNA intermediate. The proton acceptor active site deprotonates the incoming PreQ1, allowing a nucleophilic attack on the C1' of the ribose to form the product. After dissociation, two additional enzymatic reactions on the tRNA convert PreQ1 to queuine (Q), resulting in the hypermodified nucleoside queuosine (7-(((4,5-cis-dihydroxy-2-cyclopenten-1-yl)amino)methyl)-7-deazaguanosine). This chain is Queuine tRNA-ribosyltransferase, found in Edwardsiella ictaluri (strain 93-146).